Here is a 467-residue protein sequence, read N- to C-terminus: Glutamate--tRNA ligase 2 (467 aa).

The short motif at 18–28 (PSPTGYLHVGG) is the 'HIGH' region element. Residues 238-242 (PLSKR) carry the 'KMSKS' region motif. Lys241 is an ATP binding site.

It belongs to the class-I aminoacyl-tRNA synthetase family. Glutamate--tRNA ligase type 1 subfamily. As to quaternary structure, monomer.

Its subcellular location is the cytoplasm. It carries out the reaction tRNA(Glu) + L-glutamate + ATP = L-glutamyl-tRNA(Glu) + AMP + diphosphate. In terms of biological role, catalyzes the attachment of glutamate to tRNA(Glu) in a two-step reaction: glutamate is first activated by ATP to form Glu-AMP and then transferred to the acceptor end of tRNA(Glu). The protein is Glutamate--tRNA ligase 2 of Fervidobacterium nodosum (strain ATCC 35602 / DSM 5306 / Rt17-B1).